The following is a 137-amino-acid chain: uncharacterized protein (137 aa).

The signal sequence occupies residues 1 to 21 (MFNRRVLFLSVFSCAVFMLSG). Cys-22 is lipidated: N-palmitoyl cysteine. Cys-22 carries S-diacylglycerol cysteine lipidation.

The protein resides in the membrane. This is an uncharacterized protein from Escherichia coli (strain K12).